Reading from the N-terminus, the 133-residue chain is Large ribosomal subunit protein bL17 (133 aa).

It belongs to the bacterial ribosomal protein bL17 family. Part of the 50S ribosomal subunit. Contacts protein L32.

This chain is Large ribosomal subunit protein bL17, found in Idiomarina loihiensis (strain ATCC BAA-735 / DSM 15497 / L2-TR).